We begin with the raw amino-acid sequence, 72 residues long: Translational regulator CsrA (72 aa).

Belongs to the CsrA/RsmA family. In terms of assembly, homodimer; the beta-strands of each monomer intercalate to form a hydrophobic core, while the alpha-helices form wings that extend away from the core.

The protein resides in the cytoplasm. Its function is as follows. A translational regulator that binds mRNA to regulate translation initiation and/or mRNA stability. Usually binds in the 5'-UTR at or near the Shine-Dalgarno sequence preventing ribosome-binding, thus repressing translation. Its main target seems to be the major flagellin gene, while its function is anatagonized by FliW. In Clostridium botulinum (strain 657 / Type Ba4), this protein is Translational regulator CsrA.